A 422-amino-acid polypeptide reads, in one-letter code: MKKFRIQGPCSLSGEVMISGSKNAALPILFSTLLSEEPIELKNIPELKDIDTTLNLLKQLGVKAKYQPPDSIMIDAKAVNHFCAPYELVKTMRASIWALGPLVARFGRGQVSLPGGCAIGARPVDLHIFGLKQLGAKIQIEEGYIKASVEGRLKGAHIVMDKVSVGATLTVMSAATLAEGTSIIENVAREPEIVDTANFLNILGANIQGAGTDKIVVEGVKRLRGGAYSIMPDRIETGTFLVAGAVSRGKVVCRHTQPATLEAVLAKLHEAGAQIEVGKDWISLDMKGKRPKAVNVRTTPYPGFPTDMQAQFTLLNIVATGTGVITETIFENRFMHVPELIRMGAQVKIESNTVICHGVERLSGAGVMATDLRASASLVLAGCIAQGITTVERIYHIDRGYECIENKLRKLGAYIERIQGAQ.

22-23 (KN) contributes to the phosphoenolpyruvate binding site. R93 provides a ligand contact to UDP-N-acetyl-alpha-D-glucosamine. The active-site Proton donor is C117. C117 is subject to 2-(S-cysteinyl)pyruvic acid O-phosphothioketal. UDP-N-acetyl-alpha-D-glucosamine is bound by residues 122–126 (RPVDL), 162–165 (KVSV), D307, and I329.

It belongs to the EPSP synthase family. MurA subfamily.

The protein localises to the cytoplasm. The enzyme catalyses phosphoenolpyruvate + UDP-N-acetyl-alpha-D-glucosamine = UDP-N-acetyl-3-O-(1-carboxyvinyl)-alpha-D-glucosamine + phosphate. Its pathway is cell wall biogenesis; peptidoglycan biosynthesis. Its function is as follows. Cell wall formation. Adds enolpyruvyl to UDP-N-acetylglucosamine. This chain is UDP-N-acetylglucosamine 1-carboxyvinyltransferase, found in Hamiltonella defensa subsp. Acyrthosiphon pisum (strain 5AT).